The following is a 554-amino-acid chain: Aspartyl/glutamyl-tRNA(Asn/Gln) amidotransferase subunit B (554 aa).

The interval 491–554 (AEQPTAPPPE…TPVSHQDAHA (64 aa)) is disordered. The span at 502–540 (ESAAETPEAPPAVEDAPPEAPTEAITAEAGSAEAITAAS) shows a compositional bias: low complexity.

It belongs to the GatB/GatE family. GatB subfamily. As to quaternary structure, heterotrimer of A, B and C subunits.

It carries out the reaction L-glutamyl-tRNA(Gln) + L-glutamine + ATP + H2O = L-glutaminyl-tRNA(Gln) + L-glutamate + ADP + phosphate + H(+). The catalysed reaction is L-aspartyl-tRNA(Asn) + L-glutamine + ATP + H2O = L-asparaginyl-tRNA(Asn) + L-glutamate + ADP + phosphate + 2 H(+). Functionally, allows the formation of correctly charged Asn-tRNA(Asn) or Gln-tRNA(Gln) through the transamidation of misacylated Asp-tRNA(Asn) or Glu-tRNA(Gln) in organisms which lack either or both of asparaginyl-tRNA or glutaminyl-tRNA synthetases. The reaction takes place in the presence of glutamine and ATP through an activated phospho-Asp-tRNA(Asn) or phospho-Glu-tRNA(Gln). The polypeptide is Aspartyl/glutamyl-tRNA(Asn/Gln) amidotransferase subunit B (Gloeobacter violaceus (strain ATCC 29082 / PCC 7421)).